Consider the following 224-residue polypeptide: Non-structural protein V (224 aa).

Over residues 54–65 the composition is skewed to polar residues; sequence QKNIQHPTASHQ. Disordered stretches follow at residues 54-96 and 150-171; these read QKNI…DPEP and TEFK…GGHR. Residues histidine 170, cysteine 189, cysteine 193, cysteine 205, cysteine 207, cysteine 210, cysteine 214, and cysteine 217 each coordinate Zn(2+).

It belongs to the paramyxoviruses V protein family. Interacts with host IFIH1/MDA5 and DHX58/LGP2. Forms with host DDB1, CUL4A, STAT1, STAT2 and STAT3 the mumps virus V-dependent complex (VDC).

Its subcellular location is the virion. The protein resides in the host cytoplasm. In terms of biological role, plays an essential role in the inhibition of host immune response. Prevents the establishment of cellular antiviral state by blocking interferon-alpha/beta (IFN-alpha/beta) production and signaling pathway. Interacts with host IFIH1/MDA5 and DHX58/LGP2 to inhibit the transduction pathway involved in the activation of IFN-beta promoter, thus protecting the virus against cell antiviral state. Blocks the type I and II interferon signaling pathways by interacting with host STAT1, STAT2 and STAT3, and mediating their ubiquitination and subsequent proteasomal degradation. The sequence is that of Non-structural protein V from Mumps virus (strain SBL) (MuV).